The following is a 734-amino-acid chain: Photosystem I P700 chlorophyll a apoprotein A2 (734 aa).

The next 8 membrane-spanning stretches (helical) occupy residues 46–69, 135–158, 175–199, 273–291, 330–353, 369–395, 417–439, and 517–535; these read IFAS…FHVA, LYTG…LHLQ, LNHH…HVAI, MAHH…GHMY, LHFQ…QHMY, AALY…IFFI, AIIS…LYVH, and FLVH…LILV. The [4Fe-4S] cluster site is built by C559 and C568. A run of 2 helical transmembrane segments spans residues 575–596 and 643–665; these read AFYL…YWHW and LSVW…MFLI. Chlorophyll a contacts are provided by H654, M662, and Y670. W671 contacts phylloquinone. The chain crosses the membrane as a helical span at residues 707–727; that stretch reads LVGLAHFSVGYIFTYAAFLIA.

Belongs to the PsaA/PsaB family. The PsaA/B heterodimer binds the P700 chlorophyll special pair and subsequent electron acceptors. PSI consists of a core antenna complex that captures photons, and an electron transfer chain that converts photonic excitation into a charge separation. The eukaryotic PSI reaction center is composed of at least 11 subunits. Requires P700 is a chlorophyll a/chlorophyll a' dimer, A0 is one or more chlorophyll a, A1 is one or both phylloquinones and FX is a shared 4Fe-4S iron-sulfur center. as cofactor.

Its subcellular location is the plastid. The protein resides in the chloroplast thylakoid membrane. It catalyses the reaction reduced [plastocyanin] + hnu + oxidized [2Fe-2S]-[ferredoxin] = oxidized [plastocyanin] + reduced [2Fe-2S]-[ferredoxin]. In terms of biological role, psaA and PsaB bind P700, the primary electron donor of photosystem I (PSI), as well as the electron acceptors A0, A1 and FX. PSI is a plastocyanin-ferredoxin oxidoreductase, converting photonic excitation into a charge separation, which transfers an electron from the donor P700 chlorophyll pair to the spectroscopically characterized acceptors A0, A1, FX, FA and FB in turn. Oxidized P700 is reduced on the lumenal side of the thylakoid membrane by plastocyanin. This Spinacia oleracea (Spinach) protein is Photosystem I P700 chlorophyll a apoprotein A2.